The primary structure comprises 356 residues: Histidinol-phosphate aminotransferase (356 aa).

Residue Lys-214 is modified to N6-(pyridoxal phosphate)lysine.

This sequence belongs to the class-II pyridoxal-phosphate-dependent aminotransferase family. Histidinol-phosphate aminotransferase subfamily. In terms of assembly, homodimer. Pyridoxal 5'-phosphate serves as cofactor.

The enzyme catalyses L-histidinol phosphate + 2-oxoglutarate = 3-(imidazol-4-yl)-2-oxopropyl phosphate + L-glutamate. Its pathway is amino-acid biosynthesis; L-histidine biosynthesis; L-histidine from 5-phospho-alpha-D-ribose 1-diphosphate: step 7/9. The protein is Histidinol-phosphate aminotransferase of Escherichia coli O1:K1 / APEC.